We begin with the raw amino-acid sequence, 485 residues long: Glutamyl-tRNA(Gln) amidotransferase subunit A (485 aa).

Residues K79 and S154 each act as charge relay system in the active site. S178 functions as the Acyl-ester intermediate in the catalytic mechanism.

Belongs to the amidase family. GatA subfamily. As to quaternary structure, heterotrimer of A, B and C subunits.

It carries out the reaction L-glutamyl-tRNA(Gln) + L-glutamine + ATP + H2O = L-glutaminyl-tRNA(Gln) + L-glutamate + ADP + phosphate + H(+). Its function is as follows. Allows the formation of correctly charged Gln-tRNA(Gln) through the transamidation of misacylated Glu-tRNA(Gln) in organisms which lack glutaminyl-tRNA synthetase. The reaction takes place in the presence of glutamine and ATP through an activated gamma-phospho-Glu-tRNA(Gln). In Staphylococcus epidermidis (strain ATCC 12228 / FDA PCI 1200), this protein is Glutamyl-tRNA(Gln) amidotransferase subunit A.